The primary structure comprises 224 residues: uncharacterized protein (224 aa).

A coiled-coil region spans residues 108-137 (QLALDRAELNESIRATNENLALQYSKLQTE).

This is an uncharacterized protein from Human picobirnavirus (strain Human/Thailand/Hy005102/-) (PBV).